A 177-amino-acid chain; its full sequence is Putative membrane protein 165 (177 aa).

Topologically, residues 1–7 (MYLVLLI) are intravirion. Residues 8–24 (AVILFIIVILMIFLISG) traverse the membrane as a helical segment. Residues 25-166 (LFYPEQEPAL…DPHPALKSKN (142 aa)) lie on the Virion surface side of the membrane.

The protein belongs to the asfivirus envelope protein p22 family.

It localises to the virion membrane. It is found in the host cell membrane. The sequence is that of Putative membrane protein 165 from African swine fever virus (isolate Pig/Kenya/KEN-50/1950) (ASFV).